The chain runs to 420 residues: Anaerobic glycerol-3-phosphate dehydrogenase subunit B (420 aa).

It belongs to the anaerobic G-3-P dehydrogenase subunit B family. Composed of a catalytic GlpA/B dimer and of membrane bound GlpC. It depends on FMN as a cofactor.

The catalysed reaction is a quinone + sn-glycerol 3-phosphate = dihydroxyacetone phosphate + a quinol. It functions in the pathway polyol metabolism; glycerol degradation via glycerol kinase pathway; glycerone phosphate from sn-glycerol 3-phosphate (anaerobic route): step 1/1. Functionally, conversion of glycerol 3-phosphate to dihydroxyacetone. Uses fumarate or nitrate as electron acceptor. The chain is Anaerobic glycerol-3-phosphate dehydrogenase subunit B from Pectobacterium carotovorum subsp. carotovorum (strain PC1).